The primary structure comprises 360 residues: Peptide chain release factor 1 (360 aa).

The residue at position 234 (Q234) is an N5-methylglutamine.

It belongs to the prokaryotic/mitochondrial release factor family. In terms of processing, methylated by PrmC. Methylation increases the termination efficiency of RF1.

The protein localises to the cytoplasm. Functionally, peptide chain release factor 1 directs the termination of translation in response to the peptide chain termination codons UAG and UAA. The chain is Peptide chain release factor 1 from Renibacterium salmoninarum (strain ATCC 33209 / DSM 20767 / JCM 11484 / NBRC 15589 / NCIMB 2235).